The primary structure comprises 432 residues: CLOCK-interacting pacemaker (432 aa).

Disordered regions lie at residues 71 to 98 and 194 to 315; these read ADSD…SEDM and SYTK…SSPL. Serine 246 is modified (phosphoserine). Positions 272–283 are enriched in polar residues; sequence SPQTLQPVSSSH. The stretch at 364–395 forms a coiled coil; the sequence is EITLKTKELIRQNQATQAELDQLKEQTQMFIE. The segment at 408–432 is disordered; the sequence is LQASLTSGSSHSGSDLDTLSDHPDV. The segment covering 411–424 has biased composition (low complexity); that stretch reads SLTSGSSHSGSDLD.

As to quaternary structure, interacts with CLOCK. Forms a ternary complex with the CLOCK-BMAL1 heterodimer. Interacts with CAD and HSPA5. As to expression, expressed in the heart, kidney and liver and shows a circadian oscillation in these tissues with a peak at circadian time 14 hours (at protein level). Expressed in the brain, including the suprachiasmatic nucleus (SCN) of the brain, and in multiple peripheral tissues such as heart, liver and kidney. Exhibits a circadian oscillation in the peripheral tissues with a peak at circadian time 14 hours.

Its subcellular location is the nucleus. The protein localises to the cytoplasm. It localises to the cytosol. Transcriptional repressor which may act as a negative-feedback regulator of CLOCK-BMAL1 transcriptional activity in the circadian-clock mechanism. May stimulate BMAL1-dependent phosphorylation of CLOCK. However, the physiological relevance of these observations is unsure, since experiments in knockout mice showed that CIPC is not critially required for basic circadian clock. The protein is CLOCK-interacting pacemaker (Cipc) of Mus musculus (Mouse).